The following is a 196-amino-acid chain: Segregation and condensation protein B (196 aa).

It belongs to the ScpB family. As to quaternary structure, homodimer. Homodimerization may be required to stabilize the binding of ScpA to the Smc head domains. Component of a cohesin-like complex composed of ScpA, ScpB and the Smc homodimer, in which ScpA and ScpB bind to the head domain of Smc. The presence of the three proteins is required for the association of the complex with DNA.

The protein localises to the cytoplasm. Its function is as follows. Participates in chromosomal partition during cell division. May act via the formation of a condensin-like complex containing Smc and ScpA that pull DNA away from mid-cell into both cell halves. This chain is Segregation and condensation protein B, found in Pediococcus pentosaceus (strain ATCC 25745 / CCUG 21536 / LMG 10740 / 183-1w).